Here is a 202-residue protein sequence, read N- to C-terminus: Protein Thf1 (202 aa).

Positions 174–202 form a coiled coil; that stretch reads IYKSSILKMEQAKELLQEAKIKDKKEKKK.

It belongs to the THF1 family.

Functionally, may be involved in photosynthetic membrane biogenesis. The polypeptide is Protein Thf1 (Prochlorococcus marinus subsp. pastoris (strain CCMP1986 / NIES-2087 / MED4)).